Here is a 302-residue protein sequence, read N- to C-terminus: Pyridoxal 5'-phosphate synthase subunit PdxS (302 aa).

D-ribose 5-phosphate is bound at residue Asp32. Catalysis depends on Lys89, which acts as the Schiff-base intermediate with D-ribose 5-phosphate. Gly161 contributes to the D-ribose 5-phosphate binding site. A D-glyceraldehyde 3-phosphate-binding site is contributed by Arg173. D-ribose 5-phosphate is bound by residues Gly222 and 243–244; that span reads GS. A disordered region spans residues 276-302; the sequence is ASNPGKGMKGEANADLSEGEKLQTRGV. Over residues 293–302 the composition is skewed to basic and acidic residues; that stretch reads EGEKLQTRGV.

The protein belongs to the PdxS/SNZ family. In the presence of PdxT, forms a dodecamer of heterodimers.

It catalyses the reaction aldehydo-D-ribose 5-phosphate + D-glyceraldehyde 3-phosphate + L-glutamine = pyridoxal 5'-phosphate + L-glutamate + phosphate + 3 H2O + H(+). It participates in cofactor biosynthesis; pyridoxal 5'-phosphate biosynthesis. In terms of biological role, catalyzes the formation of pyridoxal 5'-phosphate from ribose 5-phosphate (RBP), glyceraldehyde 3-phosphate (G3P) and ammonia. The ammonia is provided by the PdxT subunit. Can also use ribulose 5-phosphate and dihydroxyacetone phosphate as substrates, resulting from enzyme-catalyzed isomerization of RBP and G3P, respectively. The polypeptide is Pyridoxal 5'-phosphate synthase subunit PdxS (Haloquadratum walsbyi (strain DSM 16790 / HBSQ001)).